The chain runs to 136 residues: Large ribosomal subunit protein uL22 (136 aa).

It belongs to the universal ribosomal protein uL22 family. As to quaternary structure, part of the 50S ribosomal subunit.

In terms of biological role, this protein binds specifically to 23S rRNA; its binding is stimulated by other ribosomal proteins, e.g. L4, L17, and L20. It is important during the early stages of 50S assembly. It makes multiple contacts with different domains of the 23S rRNA in the assembled 50S subunit and ribosome. Its function is as follows. The globular domain of the protein is located near the polypeptide exit tunnel on the outside of the subunit, while an extended beta-hairpin is found that lines the wall of the exit tunnel in the center of the 70S ribosome. The chain is Large ribosomal subunit protein uL22 from Leifsonia xyli subsp. xyli (strain CTCB07).